The chain runs to 220 residues: Fructose-6-phosphate aldolase 1 (220 aa).

Lys-85 (schiff-base intermediate with substrate) is an active-site residue.

The protein belongs to the transaldolase family. Type 3A subfamily. Homodecamer. Five subunits are arranged as a pentamer, and two ring-like pentamers pack like a donut to form the decamer.

The protein resides in the cytoplasm. It catalyses the reaction beta-D-fructose 6-phosphate = dihydroxyacetone + D-glyceraldehyde 3-phosphate. With respect to regulation, inhibited by glycerol, inorganic phosphate and arabinose 5-phosphate. Catalyzes the reversible formation of fructose 6-phosphate from dihydroxyacetone (DHA) and D-glyceraldehyde 3-phosphate via an aldolization reaction. Can utilize several aldehydes as acceptor compounds in vitro, and hydroxyacetone (HA) or 1-hydroxy-butan-2-one as alternative donor substrate. Is also able to catalyze the direct stereoselective self-aldol addition of glycolaldehyde to furnish D-(-)-threose, and cross-aldol reactions of glycolaldehyde to other aldehyde acceptors. Is not able to cleave fructose, fructose 1-phosphate, glucose 6-phosphate, sedoheptulose 1,7-bisphosphate, xylulose 5-phosphate, ribulose 5-phosphate, and fructose 1,6-bisphosphate; cannot use dihydroxyacetone phosphate as donor compound nor D-glyceraldehyde as acceptor. Does not display transaldolase activity. This chain is Fructose-6-phosphate aldolase 1 (fsaA), found in Escherichia coli (strain K12).